A 513-amino-acid polypeptide reads, in one-letter code: 5-aminolevulinate synthase, erythroid-specific, mitochondrial (513 aa).

Residues 1-18 constitute a mitochondrion transit peptide; the sequence is MAAFLRCPLLARHPPLAR. Arginine 98 lines the succinyl-CoA pocket. Pyridoxal 5'-phosphate contacts are provided by cysteine 190 and phenylalanine 191. Residues serine 212 and lysine 231 each contribute to the succinyl-CoA site. Pyridoxal 5'-phosphate is bound by residues serine 264, histidine 292, and threonine 320. Lysine 323 is an active-site residue. Position 323 is an N6-(pyridoxal phosphate)lysine (lysine 323). Residues threonine 352 and threonine 353 each coordinate pyridoxal 5'-phosphate. Residue threonine 437 coordinates succinyl-CoA.

Belongs to the class-II pyridoxal-phosphate-dependent aminotransferase family. Homodimer. Pyridoxal 5'-phosphate is required as a cofactor. As to expression, erythroid-specific.

The protein localises to the mitochondrion inner membrane. It carries out the reaction succinyl-CoA + glycine + H(+) = 5-aminolevulinate + CO2 + CoA. The protein operates within porphyrin-containing compound metabolism; protoporphyrin-IX biosynthesis; 5-aminolevulinate from glycine: step 1/1. Catalyzes the pyridoxal 5'-phosphate (PLP)-dependent condensation of succinyl-CoA and glycine to form aminolevulinic acid (ALA), with CoA and CO2 as by-products. Contributes significantly to heme formation during erythropoiesis. The protein is 5-aminolevulinate synthase, erythroid-specific, mitochondrial (ALAS2) of Gallus gallus (Chicken).